A 466-amino-acid polypeptide reads, in one-letter code: Asparagine--tRNA ligase (466 aa).

Belongs to the class-II aminoacyl-tRNA synthetase family. Homodimer.

The protein resides in the cytoplasm. It catalyses the reaction tRNA(Asn) + L-asparagine + ATP = L-asparaginyl-tRNA(Asn) + AMP + diphosphate + H(+). This chain is Asparagine--tRNA ligase, found in Yersinia enterocolitica serotype O:8 / biotype 1B (strain NCTC 13174 / 8081).